Consider the following 140-residue polypeptide: Extracellular globin-1 (140 aa).

Positions 1 to 140 (ECDVLERFKV…YDFIASGIKP (140 aa)) constitute a Globin domain. Cysteine 2 and cysteine 130 are joined by a disulfide. Histidine 93 is a binding site for heme b.

The protein belongs to the globin family. The giant hemoglobins of worms are formed of a monomeric subunit and a disulfide-bonded trimer. This subunit is monomeric.

It localises to the secreted. This is Extracellular globin-1 from Metaphire hilgendorfi (Earthworm).